The sequence spans 2554 residues: DnaJ homolog subfamily C GRV2 (2554 aa).

Disordered regions lie at residues 746 to 766 (DVVDDTDQEGSSTNRRQKRLL) and 810 to 833 (QRRAADSSSEASNPQASAFPGVDS). The span at 815–825 (DSSSEASNPQA) shows a compositional bias: polar residues. Coiled-coil stretches lie at residues 925–951 (TRQELIEALKAEVHNLDVEKERTEDIS) and 1518–1546 (RTASVELNEEISNISKQIQNLDEEKLKRQ). One can recognise a J domain in the interval 1524 to 1606 (LNEEISNISK…AQCILYRRYG (83 aa)). Disordered regions lie at residues 1960 to 1994 (IEDRNSSNDTPELQSSVAEPSLIEEHSDHQPSSEG) and 2339 to 2366 (SGEVKAEEIGSDGVNESTDPSSLPGQTP). The span at 1966 to 1977 (SNDTPELQSSVA) shows a compositional bias: polar residues. Basic and acidic residues predominate over residues 1982 to 1994 (IEEHSDHQPSSEG). Residues 2352-2366 (VNESTDPSSLPGQTP) show a composition bias toward polar residues.

In terms of tissue distribution, constitutively expressed in roots, hypocotyls, leaves (e.g. vascular tissues), stems, flowers (e.g. petals and stigmas), siliques and pollen.

Its subcellular location is the endosome membrane. Required for endosome formation, vacuolar protein sorting and determination of the embryo growth axis. Necessary for the transport of proteins into protein storage vacuoles (PSVs). Participates in vesicle trafficking from the endosome to the central vacuole. Involved in the regulation of shoot phototropism and gravitropism, probably through the positioning of specialized amyloplasts (statoliths) in endodermal cells. The chain is DnaJ homolog subfamily C GRV2 (GRV2) from Arabidopsis thaliana (Mouse-ear cress).